The chain runs to 264 residues: Shikimate dehydrogenase (NADP(+)) (264 aa).

Shikimate-binding positions include 14–16 (SVS) and Thr61. The Proton acceptor role is filled by Lys65. Shikimate contacts are provided by Asn85 and Asp99. Residues 122–126 (GAGGA), 145–150 (NRTVSR), and Ala208 each bind NADP(+). Position 210 (Tyr210) interacts with shikimate. Gly231 is a binding site for NADP(+).

Belongs to the shikimate dehydrogenase family. In terms of assembly, homodimer.

The catalysed reaction is shikimate + NADP(+) = 3-dehydroshikimate + NADPH + H(+). It functions in the pathway metabolic intermediate biosynthesis; chorismate biosynthesis; chorismate from D-erythrose 4-phosphate and phosphoenolpyruvate: step 4/7. Its function is as follows. Involved in the biosynthesis of the chorismate, which leads to the biosynthesis of aromatic amino acids. Catalyzes the reversible NADPH linked reduction of 3-dehydroshikimate (DHSA) to yield shikimate (SA). The sequence is that of Shikimate dehydrogenase (NADP(+)) from Natronomonas pharaonis (strain ATCC 35678 / DSM 2160 / CIP 103997 / JCM 8858 / NBRC 14720 / NCIMB 2260 / Gabara) (Halobacterium pharaonis).